We begin with the raw amino-acid sequence, 536 residues long: DNA damage-binding protein CMR1 (536 aa).

Over residues 36–45 the composition is skewed to basic and acidic residues; it reads REAGVDDTHR. The disordered stretch occupies residues 36–72; that stretch reads REAGVDDTHRTVVKKKKSPSVSRGRSASPKVAPVATR. 6 WD repeats span residues 195–236, 251–291, 346–386, 403–442, 456–495, and 496–535; these read LVYE…LSEN, FFTK…SNDI, LSDK…KKPE, DSRL…LPDD, GRWT…LAHL, and PTAT…KEEE.

The protein belongs to the WD repeat DDB2/WDR76 family.

Its function is as follows. DNA-binding protein that binds to both single- and double-stranded DNA. Binds preferentially to UV-damaged DNA. May be involved in DNA-metabolic processes. This is DNA damage-binding protein CMR1 from Vanderwaltozyma polyspora (strain ATCC 22028 / DSM 70294 / BCRC 21397 / CBS 2163 / NBRC 10782 / NRRL Y-8283 / UCD 57-17) (Kluyveromyces polysporus).